A 464-amino-acid polypeptide reads, in one-letter code: Argininosuccinate lyase (464 aa).

It belongs to the lyase 1 family. Argininosuccinate lyase subfamily.

The protein resides in the cytoplasm. The catalysed reaction is 2-(N(omega)-L-arginino)succinate = fumarate + L-arginine. The protein operates within amino-acid biosynthesis; L-arginine biosynthesis; L-arginine from L-ornithine and carbamoyl phosphate: step 3/3. This is Argininosuccinate lyase from Pseudomonas entomophila (strain L48).